The chain runs to 387 residues: 1,3-propanediol dehydrogenase (387 aa).

This sequence belongs to the iron-containing alcohol dehydrogenase family. Homooctamer. The cofactor is Fe cation.

It catalyses the reaction propane-1,3-diol + NAD(+) = 3-hydroxypropanal + NADH + H(+). Its activity is regulated as follows. Inhibited by the metal chelator 1,10-phenanthroline. Its function is as follows. Catalyzes the reduction of 3-hydroxypropanal. Is considerably less active with glyceraldehyde, propionaldehyde, acetaldehyde, and butyraldehyde. Also catalyzes the oxidation of various primary, secondary, and tertiary alcohols. Is most active with substrates containing two primary alcohol groups separated by one or two carbon atoms. 1,3-propanediol is the preferred substrate. This Citrobacter freundii protein is 1,3-propanediol dehydrogenase.